The sequence spans 494 residues: Paired box protein Pax-2-B (494 aa).

Positions 15 to 141 form a DNA-binding region, paired; sequence RHGGVNQLGG…SSINRIIRTK (127 aa). Positions 18-74 are PAI subdomain; sequence GVNQLGGVFVNGRPLPDVVRQRIVELAHQGVRPCDISRQLRVSHGCVSKILGRYYET. Residues 93–141 are RED subdomain; sequence KVVDKIADYKRQNPTMFAWEIRDRLLAEGICDNDTVPSVSSINRIIRTK. Residues 142 to 221 form a disordered region; it reads VQQPFHPTPD…GDSQSSVESL (80 aa). A compositionally biased stretch (low complexity) spans 163–175; the sequence is VPSTASPPVSSAS.

As to expression, expression becomes spatially localized at mid-gastrula stages and is localized to the nervous system (midbrain, hindbrain, spinal cord), sensory organs (optic vesicle and stalk, otic vesicle), visceral arches, developing excretory system (pronephros, pronephric duct, rectal diverticulum, proctodaeum) and thryoid gland. Splicing does not appear to be tissue-specific.

The protein localises to the nucleus. Probable transcription factor. Involved in kidney development, acting synergistically with lhx1/lim-1 in pronephric morphogenesis during the tailbud stages. This Xenopus laevis (African clawed frog) protein is Paired box protein Pax-2-B (pax2-b).